We begin with the raw amino-acid sequence, 126 residues long: MARVSGVDIPREKRVEVALTYVFGIGRTLSQKTLAETGVNPNTRVRDLSEEELVRIREYVDNNFKTEGDLRREVQADIRRKVEIGCYQGLRHRRGLPVHGQRTSTNARTRKGPRRAIAGKKKPGKK.

A disordered region spans residues 94–126; sequence RGLPVHGQRTSTNARTRKGPRRAIAGKKKPGKK. Residues 108–126 show a composition bias toward basic residues; the sequence is RTRKGPRRAIAGKKKPGKK.

The protein belongs to the universal ribosomal protein uS13 family. As to quaternary structure, part of the 30S ribosomal subunit. Forms a loose heterodimer with protein S19. Forms two bridges to the 50S subunit in the 70S ribosome.

Located at the top of the head of the 30S subunit, it contacts several helices of the 16S rRNA. In the 70S ribosome it contacts the 23S rRNA (bridge B1a) and protein L5 of the 50S subunit (bridge B1b), connecting the 2 subunits; these bridges are implicated in subunit movement. Contacts the tRNAs in the A and P-sites. This chain is Small ribosomal subunit protein uS13, found in Streptomyces avermitilis (strain ATCC 31267 / DSM 46492 / JCM 5070 / NBRC 14893 / NCIMB 12804 / NRRL 8165 / MA-4680).